The sequence spans 3317 residues: Cadherin-23 (3317 aa).

The first 23 residues, 1 to 23, serve as a signal peptide directing secretion; it reads MRHPPVTWCAMLWLLMLVSGSWG. Residues 24-3062 lie on the Extracellular side of the membrane; it reads QVNRLPFFTN…SVQLPDDMSA (3039 aa). 27 consecutive Cadherin domains span residues 34–132, 133–236, 237–348, 349–458, 459–559, 560–669, 670–782, 777–888, 889–993, 994–1100, 1101–1206, 1208–1311, 1312–1416, 1418–1525, 1527–1632, 1633–1742, 1743–1849, 1850–1957, 1958–2067, 2068–2172, 2173–2291, 2295–2400, 2401–2507, 2508–2609, 2612–2720, 2727–2844, and 2845–2973; these read HFFD…APTF, HNQP…DPIF, INLP…APEF, NSSE…RPIF, SQPL…VPTF, QKDA…PPTF, SKPA…APYY, KDAP…DPTF, QNLP…TPTF, FPAV…RPIF, LQSS…APVF, QQQY…AVQF, SNAS…SPRF, FTSD…PPVI, SPFG…APVF, QQPH…VPTF, PRDY…DPVL, LNLP…HPLF, TEGT…WPTF, SPPA…RPEF, LNPI…TPQF, GITY…NPIF, DQLS…RPQF, SKPQ…RPVF, PPNG…EPLF, SPQY…PPRF, and TKAE…EEEF. 2 N-linked (GlcNAc...) asparagine glycosylation sites follow: asparagine 155 and asparagine 206. Asparagine 349, asparagine 391, asparagine 432, asparagine 464, asparagine 470, asparagine 600, asparagine 692, asparagine 763, asparagine 808, asparagine 825, asparagine 939, asparagine 999, asparagine 1016, asparagine 1169, asparagine 1280, asparagine 1313, asparagine 1471, asparagine 1532, asparagine 1649, asparagine 1665, asparagine 1816, asparagine 1855, asparagine 1887, asparagine 1900, asparagine 2012, asparagine 2048, asparagine 2127, asparagine 2166, asparagine 2193, asparagine 2261, asparagine 2355, and asparagine 2367 each carry an N-linked (GlcNAc...) asparagine glycan. Residues asparagine 2576, asparagine 2614, asparagine 2747, asparagine 2806, asparagine 2875, asparagine 2894, asparagine 2939, and asparagine 2979 are each glycosylated (N-linked (GlcNAc...) asparagine). The helical transmembrane segment at 3063-3083 threads the bilayer; the sequence is LQMAIIVLAILLFLAAMLFVL. The Cytoplasmic portion of the chain corresponds to 3084 to 3317; that stretch reads MNWYYRTIHK…MESPLEITEL (234 aa).

As to quaternary structure, antiparallel heterodimer with PCDH15. Interacts with USH1C and USH1G.

Its subcellular location is the cell membrane. Cadherins are calcium-dependent cell adhesion proteins. They preferentially interact with themselves in a homophilic manner in connecting cells. CDH23 is required for establishing and/or maintaining the proper organization of the stereocilia bundle of hair cells in the cochlea and the vestibule during late embryonic/early postnatal development. It is part of the functional network formed by USH1C, USH1G, CDH23 and MYO7A that mediates mechanotransduction in cochlear hair cells. Required for normal hearing. The polypeptide is Cadherin-23 (Cdh23) (Rattus norvegicus (Rat)).